The primary structure comprises 237 residues: Small ribosomal subunit protein uS3 (237 aa).

Residues 39 to 107 (VRQFLTKELK…PAQINISEVR (69 aa)) enclose the KH type-2 domain.

It belongs to the universal ribosomal protein uS3 family. In terms of assembly, part of the 30S ribosomal subunit. Forms a tight complex with proteins S10 and S14.

In terms of biological role, binds the lower part of the 30S subunit head. Binds mRNA in the 70S ribosome, positioning it for translation. The chain is Small ribosomal subunit protein uS3 from Aeromonas hydrophila subsp. hydrophila (strain ATCC 7966 / DSM 30187 / BCRC 13018 / CCUG 14551 / JCM 1027 / KCTC 2358 / NCIMB 9240 / NCTC 8049).